A 793-amino-acid chain; its full sequence is Protein translocase subunit SecA 2 (793 aa).

Residues Gln-77, 95–99 (GEGKT), and Asp-493 contribute to the ATP site.

Belongs to the SecA family. Monomer and homodimer (Potential). Part of the accessory SecA2/SecY2 protein translocation apparatus required to export cell wall protein GspB.

It is found in the cell membrane. Its subcellular location is the cytoplasm. It carries out the reaction ATP + H2O + cellular proteinSide 1 = ADP + phosphate + cellular proteinSide 2.. Part of the accessory SecA2/SecY2 system specifically required to export GspB, a serine-rich repeat cell wall protein encoded upstream in the same operon. The polypeptide is Protein translocase subunit SecA 2 (Streptococcus gordonii).